We begin with the raw amino-acid sequence, 276 residues long: Pantothenate synthetase (276 aa).

Residue 27-34 (MGALHRGH) participates in ATP binding. His-34 acts as the Proton donor in catalysis. Gln-58 serves as a coordination point for (R)-pantoate. Gln-58 provides a ligand contact to beta-alanine. 147 to 150 (GKKD) is a binding site for ATP. Gln-153 contacts (R)-pantoate. ATP contacts are provided by residues Val-176 and 184–187 (LSSR).

Belongs to the pantothenate synthetase family. In terms of assembly, homodimer.

It is found in the cytoplasm. It carries out the reaction (R)-pantoate + beta-alanine + ATP = (R)-pantothenate + AMP + diphosphate + H(+). The protein operates within cofactor biosynthesis; (R)-pantothenate biosynthesis; (R)-pantothenate from (R)-pantoate and beta-alanine: step 1/1. Its function is as follows. Catalyzes the condensation of pantoate with beta-alanine in an ATP-dependent reaction via a pantoyl-adenylate intermediate. In Helicobacter pylori (strain G27), this protein is Pantothenate synthetase.